Consider the following 131-residue polypeptide: Histone H2B.2 (131 aa).

A compositionally biased stretch (basic and acidic residues) spans 1–20; sequence MAPPKAEKKPASKAPAEKKP. Residues 1 to 39 form a disordered region; that stretch reads MAPPKAEKKPASKAPAEKKPAAKKTASSTDAKKRTKTRK. N6-acetyllysine; alternate occurs at positions 8 and 9. Glycyl lysine isopeptide (Lys-Gly) (interchain with G-Cter in SUMO); alternate cross-links involve residues K8 and K9. S12 is subject to Phosphoserine. K13 carries the N6-acetyllysine modification. K18 bears the N6-acetyllysine; alternate mark. A Glycyl lysine isopeptide (Lys-Gly) (interchain with G-Cter in SUMO); alternate cross-link involves residue K18. K19 participates in a covalent cross-link: Glycyl lysine isopeptide (Lys-Gly) (interchain with G-Cter in SUMO). A Glycyl lysine isopeptide (Lys-Gly) (interchain with G-Cter in ubiquitin) cross-link involves residue K125.

Belongs to the histone H2B family. The nucleosome is a histone octamer containing two molecules each of H2A, H2B, H3 and H4 assembled in one H3-H4 heterotetramer and two H2A-H2B heterodimers. The octamer wraps approximately 147 bp of DNA. Monoubiquitinated to form H2BK123ub1. H2BK123ub1 gives a specific tag for epigenetic transcriptional activation and is also prerequisite for H3K4me and H3K79me formation. H2BK123ub1 also modulates the formation of double-strand breaks during meiosis and is a prerequisite for DNA-damage checkpoint activation. Post-translationally, phosphorylated by STE20 to form H2BS10ph during progression through meiotic prophase. May be correlated with chromosome condensation. In terms of processing, acetylated by GCN5 to form H2BK11ac and H2BK16ac. H2BK16ac can also be formed by ESA1. Acetylation of N-terminal lysines and particularly formation of H2BK11acK16ac has a positive effect on transcription. Sumoylation to form H2BK6su or H2BK7su, and probably also H2BK16su or H2BK17su, occurs preferentially near the telomeres and represses gene transcription.

It is found in the nucleus. It localises to the chromosome. In terms of biological role, core component of nucleosome. Nucleosomes wrap and compact DNA into chromatin, limiting DNA accessibility to the cellular machineries which require DNA as a template. Histones thereby play a central role in transcription regulation, DNA repair, DNA replication and chromosomal stability. DNA accessibility is regulated via a complex set of post-translational modifications of histones, also called histone code, and nucleosome remodeling. The polypeptide is Histone H2B.2 (HTB2) (Scheffersomyces stipitis (strain ATCC 58785 / CBS 6054 / NBRC 10063 / NRRL Y-11545) (Yeast)).